Reading from the N-terminus, the 266-residue chain is Ribosomal RNA small subunit methyltransferase A (266 aa).

Asn-12, Leu-14, Gly-39, Glu-61, Asp-87, and Asn-107 together coordinate S-adenosyl-L-methionine.

The protein belongs to the class I-like SAM-binding methyltransferase superfamily. rRNA adenine N(6)-methyltransferase family. RsmA subfamily.

It is found in the cytoplasm. It catalyses the reaction adenosine(1518)/adenosine(1519) in 16S rRNA + 4 S-adenosyl-L-methionine = N(6)-dimethyladenosine(1518)/N(6)-dimethyladenosine(1519) in 16S rRNA + 4 S-adenosyl-L-homocysteine + 4 H(+). Specifically dimethylates two adjacent adenosines (A1518 and A1519) in the loop of a conserved hairpin near the 3'-end of 16S rRNA in the 30S particle. May play a critical role in biogenesis of 30S subunits. This chain is Ribosomal RNA small subunit methyltransferase A, found in Nitratidesulfovibrio vulgaris (strain DP4) (Desulfovibrio vulgaris).